A 138-amino-acid chain; its full sequence is Large ribosomal subunit protein uL16 (138 aa).

Basic residues predominate over residues 1 to 17 (MLIPRKVKHRKQHHPRQ). The segment at 1–24 (MLIPRKVKHRKQHHPRQRGIASGG) is disordered.

This sequence belongs to the universal ribosomal protein uL16 family. In terms of assembly, part of the 50S ribosomal subunit.

Its function is as follows. Binds 23S rRNA and is also seen to make contacts with the A and possibly P site tRNAs. The protein is Large ribosomal subunit protein uL16 of Mycobacterium ulcerans (strain Agy99).